We begin with the raw amino-acid sequence, 426 residues long: Serine--tRNA ligase (426 aa).

231-233 (TSE) contributes to the L-serine binding site. 262-264 (RSE) provides a ligand contact to ATP. Position 285 (glutamate 285) interacts with L-serine. 349-352 (EISS) contributes to the ATP binding site. Residue serine 385 participates in L-serine binding.

The protein belongs to the class-II aminoacyl-tRNA synthetase family. Type-1 seryl-tRNA synthetase subfamily. As to quaternary structure, homodimer. The tRNA molecule binds across the dimer.

The protein localises to the cytoplasm. The catalysed reaction is tRNA(Ser) + L-serine + ATP = L-seryl-tRNA(Ser) + AMP + diphosphate + H(+). It catalyses the reaction tRNA(Sec) + L-serine + ATP = L-seryl-tRNA(Sec) + AMP + diphosphate + H(+). Its pathway is aminoacyl-tRNA biosynthesis; selenocysteinyl-tRNA(Sec) biosynthesis; L-seryl-tRNA(Sec) from L-serine and tRNA(Sec): step 1/1. Its function is as follows. Catalyzes the attachment of serine to tRNA(Ser). Is also able to aminoacylate tRNA(Sec) with serine, to form the misacylated tRNA L-seryl-tRNA(Sec), which will be further converted into selenocysteinyl-tRNA(Sec). This Legionella pneumophila subsp. pneumophila (strain Philadelphia 1 / ATCC 33152 / DSM 7513) protein is Serine--tRNA ligase.